A 351-amino-acid chain; its full sequence is UPF0252 protein MJECL39 (351 aa).

2 consecutive transmembrane segments (helical) span residues 58 to 78 and 91 to 111; these read FITF…VWLW and IIIC…LCGV.

It belongs to the UPF0252 family.

It localises to the cell membrane. This chain is UPF0252 protein MJECL39, found in Methanocaldococcus jannaschii (strain ATCC 43067 / DSM 2661 / JAL-1 / JCM 10045 / NBRC 100440) (Methanococcus jannaschii).